Here is a 265-residue protein sequence, read N- to C-terminus: Short-chain dehydrogenase/reductase phqE (265 aa).

NADP(+) is bound by residues T23, S24, I26, S46, N47, K50, D76, R131, V203, and T205. A helical transmembrane segment spans residues 25-45 (GIGFAVCAAALGHGAIVTIVG).

This sequence belongs to the short-chain dehydrogenases/reductases (SDR) family. The cofactor is NADP(+).

The protein resides in the membrane. Its pathway is alkaloid biosynthesis. Its function is as follows. Short-chain dehydrogenase/reductase; part of the gene cluster that mediates the biosynthesis of paraherquamide, a fungal indole alkaloid that belongs to a family of natural products containing a characteristic bicyclo[2.2.2]diazaoctane core. The first steps in the biosynthesis of paraherquamide is the production of the beta-methyl-proline precursor from L-isoleucine. They require oxidation of a terminally hydroxylated L-isoleucine to the corresponding aldehyde by enzymes which have still to be identified. Spontaneous cyclization and dehydration would yield the 4-methyl pyrolline-5-carboxylic acid, which is then reduced by the pyrroline-5-carboxylate reductase phqD leading to the beta-methyl-proline precursor. The next step of paraherquamide biosynthesis involves coupling of beta-methyl-proline and L-tryptophan by the bimodular NRPS phqB, to produce a monooxopiperazine intermediate. The reductase (R) domain of phqB utilizes NADPH for hydride transfer to reduce the thioester bond of the T domain-tethered linear dipeptide to a hemithioaminal intermediate, which spontaneously cleaves the C-S bond to release the aldehyde product. This compound undergoes spontaneous cyclization and dehydration to give a dienamine which is reverse prenylated at C-2 by the reverse prenyltransferase phqJ. The other prenyltransferase present in the cluster, phqI may be a redundant gene in the pathway. During biosynthetic assembly, the key step to produce the polycyclic core is catalyzed by the bifunctional reductase and intramolecular [4+2] Diels-Alderase, phqE, resulting in formation of the [2.2.2] diazaoctane intermediate preparaherquamide. Following formation of preparaherquamide, an indole 2,3-epoxidation-initiated pinacol-like rearrangement is catalyzed by the phqK FAD-dependent monooxygenase. The prenyltransferase phqA, the cytochrome P450 monooxygenase phqL, and the FAD-linked oxidoreductase phqH (or the cytochrome P450 monooxygenase phqM), are proposed to be involved in the formation of the pyran ring. The FAD-dependent monooxygenase phqK is likely responsible for generation of the spiro-oxindole, and the N-methylation is likely mediated by the phqN methyltransferase leading to the isolable natural product paraherquamide F. However, the order of these biosynthetic steps has still to be determined. In late-stage paraherquamide biosynthesis, the third P450 monooxygenase, phqO, is probably responsible for the C-14 hydroxylation, transforming paraherquamide F to paraherquamide G, and paraherquamide E to the final product paraherquamide A. The expansion from the 6-membered ring pyran (in paraherquamides F and G) to the 7-membered dioxepin ring (in paraherquamides A and E) represents a poorly understood but intriguing process that probably involves the 2-oxoglutarate-dependent dioxygenase phqC. Finally, the remaining members of the paraherquamide cluster, including phqI as well as phqM (or phqH), do not have a clearly prescribed role and appear to be redundant. The polypeptide is Short-chain dehydrogenase/reductase phqE (Penicillium fellutanum).